A 353-amino-acid chain; its full sequence is Photosystem II protein D1 (353 aa).

Threonine 2 is modified (N-acetylthreonine). The residue at position 2 (threonine 2) is a Phosphothreonine. A run of 3 helical transmembrane segments spans residues 29–46 (YIGW…TATS), 118–133 (HFLL…EWEL), and 142–156 (WIAV…AATA). Chlorophyll a is bound at residue histidine 118. Tyrosine 126 is a binding site for pheophytin a. [CaMn4O5] cluster-binding residues include aspartate 170 and glutamate 189. The helical transmembrane segment at 197–218 (FHMLGVAGVFGGSLFSAMHGSL) threads the bilayer. Chlorophyll a is bound at residue histidine 198. A quinone-binding positions include histidine 215 and 264-265 (SF). Position 215 (histidine 215) interacts with Fe cation. Fe cation is bound at residue histidine 272. A helical membrane pass occupies residues 274–288 (FLAAWPVVGIWFTAL). [CaMn4O5] cluster contacts are provided by histidine 332, glutamate 333, aspartate 342, and alanine 344. Positions 345-353 (SVELDSIDG) are excised as a propeptide.

The protein belongs to the reaction center PufL/M/PsbA/D family. As to quaternary structure, PSII is composed of 1 copy each of membrane proteins PsbA, PsbB, PsbC, PsbD, PsbE, PsbF, PsbH, PsbI, PsbJ, PsbK, PsbL, PsbM, PsbT, PsbX, PsbY, PsbZ, Psb30/Ycf12, at least 3 peripheral proteins of the oxygen-evolving complex and a large number of cofactors. It forms dimeric complexes. Requires The D1/D2 heterodimer binds P680, chlorophylls that are the primary electron donor of PSII, and subsequent electron acceptors. It shares a non-heme iron and each subunit binds pheophytin, quinone, additional chlorophylls, carotenoids and lipids. D1 provides most of the ligands for the Mn4-Ca-O5 cluster of the oxygen-evolving complex (OEC). There is also a Cl(-1) ion associated with D1 and D2, which is required for oxygen evolution. The PSII complex binds additional chlorophylls, carotenoids and specific lipids. as cofactor. Tyr-161 forms a radical intermediate that is referred to as redox-active TyrZ, YZ or Y-Z. In terms of processing, C-terminally processed by CTPA; processing is essential to allow assembly of the oxygen-evolving complex and thus photosynthetic growth.

The protein resides in the plastid. The protein localises to the chloroplast thylakoid membrane. The enzyme catalyses 2 a plastoquinone + 4 hnu + 2 H2O = 2 a plastoquinol + O2. Photosystem II (PSII) is a light-driven water:plastoquinone oxidoreductase that uses light energy to abstract electrons from H(2)O, generating O(2) and a proton gradient subsequently used for ATP formation. It consists of a core antenna complex that captures photons, and an electron transfer chain that converts photonic excitation into a charge separation. The D1/D2 (PsbA/PsbD) reaction center heterodimer binds P680, the primary electron donor of PSII as well as several subsequent electron acceptors. The sequence is that of Photosystem II protein D1 from Gnetum parvifolium (Small-leaved jointfir).